The sequence spans 91 residues: Small ribosomal subunit protein uS19 (91 aa).

The protein belongs to the universal ribosomal protein uS19 family.

Its function is as follows. Protein S19 forms a complex with S13 that binds strongly to the 16S ribosomal RNA. This Fusobacterium nucleatum subsp. nucleatum (strain ATCC 25586 / DSM 15643 / BCRC 10681 / CIP 101130 / JCM 8532 / KCTC 2640 / LMG 13131 / VPI 4355) protein is Small ribosomal subunit protein uS19.